Here is a 97-residue protein sequence, read N- to C-terminus: Large ribosomal subunit protein bL27 (97 aa).

A propeptide spanning residues 1–12 (MLKMNLANLQLF) is cleaved from the precursor. Residues 14 to 37 (HKKGGGSTSNGRDSQAKRLGAKAA) are disordered.

It belongs to the bacterial ribosomal protein bL27 family. In terms of processing, the N-terminus is cleaved by ribosomal processing cysteine protease Prp.

This chain is Large ribosomal subunit protein bL27, found in Streptococcus agalactiae serotype III (strain NEM316).